The sequence spans 505 residues: Probable glycine dehydrogenase (decarboxylating) subunit 2 (505 aa).

Position 274 is an N6-(pyridoxal phosphate)lysine (Lys274).

It belongs to the GcvP family. C-terminal subunit subfamily. In terms of assembly, the glycine cleavage system is composed of four proteins: P, T, L and H. In this organism, the P 'protein' is a heterodimer of two subunits. Pyridoxal 5'-phosphate is required as a cofactor.

It carries out the reaction N(6)-[(R)-lipoyl]-L-lysyl-[glycine-cleavage complex H protein] + glycine + H(+) = N(6)-[(R)-S(8)-aminomethyldihydrolipoyl]-L-lysyl-[glycine-cleavage complex H protein] + CO2. Functionally, the glycine cleavage system catalyzes the degradation of glycine. The P protein binds the alpha-amino group of glycine through its pyridoxal phosphate cofactor; CO(2) is released and the remaining methylamine moiety is then transferred to the lipoamide cofactor of the H protein. The protein is Probable glycine dehydrogenase (decarboxylating) subunit 2 of Sulfurisphaera tokodaii (strain DSM 16993 / JCM 10545 / NBRC 100140 / 7) (Sulfolobus tokodaii).